The sequence spans 711 residues: Polyribonucleotide nucleotidyltransferase (711 aa).

Mg(2+) is bound by residues Asp486 and Asp492. The KH domain maps to 553-612 (PRIHTIKINPDKIKDVIGKGGSVIRALTEETGTTIEIEDDGTVKIAATDGEKAKHAIRRI). The S1 motif domain occupies 622 to 690 (GRVYTGKVTR…RQGRIRLSIK (69 aa)). The interval 689-711 (IKEATEQSQPAAAPEAPAAEQGE) is disordered. The segment covering 694–711 (EQSQPAAAPEAPAAEQGE) has biased composition (low complexity).

The protein belongs to the polyribonucleotide nucleotidyltransferase family. Component of the RNA degradosome, which is a multiprotein complex involved in RNA processing and mRNA degradation. Requires Mg(2+) as cofactor.

It localises to the cytoplasm. It catalyses the reaction RNA(n+1) + phosphate = RNA(n) + a ribonucleoside 5'-diphosphate. Involved in mRNA degradation. Catalyzes the phosphorolysis of single-stranded polyribonucleotides processively in the 3'- to 5'-direction. The polypeptide is Polyribonucleotide nucleotidyltransferase (Shigella flexneri serotype 5b (strain 8401)).